The primary structure comprises 304 residues: Negative regulator of the PHO system (304 aa).

In terms of domain architecture, Protein kinase spans 7–297; the sequence is FKQLEKVGNG…AKDALNHPWF (291 aa). ATP-binding positions include 13–21 and K36; that span reads VGNGTYATV. Catalysis depends on D133, which acts as the Proton acceptor.

This sequence belongs to the protein kinase superfamily. CMGC Ser/Thr protein kinase family. CDC2/CDKX subfamily. In terms of assembly, interacts with a number of cyclins.

The enzyme catalyses L-seryl-[protein] + ATP = O-phospho-L-seryl-[protein] + ADP + H(+). It carries out the reaction L-threonyl-[protein] + ATP = O-phospho-L-threonyl-[protein] + ADP + H(+). In terms of biological role, when phosphate concentrations are high it phosphorylates the PHO4 transcription factor thus establishing repression. The polypeptide is Negative regulator of the PHO system (PHO85) (Kluyveromyces lactis (strain ATCC 8585 / CBS 2359 / DSM 70799 / NBRC 1267 / NRRL Y-1140 / WM37) (Yeast)).